We begin with the raw amino-acid sequence, 169 residues long: Endoribonuclease YbeY (169 aa).

3 residues coordinate Zn(2+): His126, His130, and His136.

This sequence belongs to the endoribonuclease YbeY family. Zn(2+) is required as a cofactor.

The protein resides in the cytoplasm. Its function is as follows. Single strand-specific metallo-endoribonuclease involved in late-stage 70S ribosome quality control and in maturation of the 3' terminus of the 16S rRNA. The protein is Endoribonuclease YbeY of Bradyrhizobium sp. (strain BTAi1 / ATCC BAA-1182).